The following is a 200-amino-acid chain: Holliday junction branch migration complex subunit RuvA (200 aa).

The segment at 1–64 (MITSIQGTLV…EDSQTLYGFA (64 aa)) is domain I. A domain II region spans residues 65–144 (SPAERDFFRL…ATGAAPGLAT (80 aa)). The tract at residues 145-151 (QPAAAAS) is flexible linker. The interval 152-200 (PGASAHRDAVAALVALGYRSADADEAVRRASLALGEAATTESLIKKALS) is domain III.

This sequence belongs to the RuvA family. In terms of assembly, homotetramer. Forms an RuvA(8)-RuvB(12)-Holliday junction (HJ) complex. HJ DNA is sandwiched between 2 RuvA tetramers; dsDNA enters through RuvA and exits via RuvB. An RuvB hexamer assembles on each DNA strand where it exits the tetramer. Each RuvB hexamer is contacted by two RuvA subunits (via domain III) on 2 adjacent RuvB subunits; this complex drives branch migration. In the full resolvosome a probable DNA-RuvA(4)-RuvB(12)-RuvC(2) complex forms which resolves the HJ.

It localises to the cytoplasm. The RuvA-RuvB-RuvC complex processes Holliday junction (HJ) DNA during genetic recombination and DNA repair, while the RuvA-RuvB complex plays an important role in the rescue of blocked DNA replication forks via replication fork reversal (RFR). RuvA specifically binds to HJ cruciform DNA, conferring on it an open structure. The RuvB hexamer acts as an ATP-dependent pump, pulling dsDNA into and through the RuvAB complex. HJ branch migration allows RuvC to scan DNA until it finds its consensus sequence, where it cleaves and resolves the cruciform DNA. In Opitutus terrae (strain DSM 11246 / JCM 15787 / PB90-1), this protein is Holliday junction branch migration complex subunit RuvA.